The primary structure comprises 443 residues: MREILHVQGGQCGNQIGAKFWEVVCTEHGIDPTGTYRGDSETQLERVNVYYNEASCGRYVPRAVLMDLEPGTMDSVRSGHYGQIFRPDNFVFGQSGAGNNWAKGXYTEGAELIDSVLAVVRKEAENCDCLQGFQVCHSLGGGTGSGMGTLLISKIREEYPDRMMMTFSVFASPKVSDTVVEPYNATLSVHQLVENADECMVLDNEALYDIXLRTLKLVTPTFGDLNHLISATMSGVTCCLRFPGQLNSDLRKLAVNLIPFPRLHFFMVGFAPLTSRGSQQYXSLTVPELTQQMWDAKNMMCAADPRHGRYLTASAMFRGKMSTKEVDEQMINVQNKNSSYFVEWIPNNVKSSVCDIPPVGLKMAVTFIGNSTSIQEMFRRVSDQFTAMFRRKAFLHWYTGEGMDEMEFTEAESNMNDLVSEYQQYQDATAEREGEYEEDYDEA.

The GTP site is built by glutamine 11, glutamate 69, serine 138, glycine 142, threonine 143, glycine 144, asparagine 204, and asparagine 226. Glutamate 69 is a binding site for Mg(2+). The disordered stretch occupies residues 424–443 (QYQDATAEREGEYEEDYDEA). Positions 434-443 (GEYEEDYDEA) are enriched in acidic residues.

The protein belongs to the tubulin family. In terms of assembly, dimer of alpha and beta chains. A typical microtubule is a hollow water-filled tube with an outer diameter of 25 nm and an inner diameter of 15 nM. Alpha-beta heterodimers associate head-to-tail to form protofilaments running lengthwise along the microtubule wall with the beta-tubulin subunit facing the microtubule plus end conferring a structural polarity. Microtubules usually have 13 protofilaments but different protofilament numbers can be found in some organisms and specialized cells. Mg(2+) serves as cofactor.

Its subcellular location is the cytoplasm. The protein localises to the cytoskeleton. Tubulin is the major constituent of microtubules, a cylinder consisting of laterally associated linear protofilaments composed of alpha- and beta-tubulin heterodimers. Microtubules grow by the addition of GTP-tubulin dimers to the microtubule end, where a stabilizing cap forms. Below the cap, tubulin dimers are in GDP-bound state, owing to GTPase activity of alpha-tubulin. This is Tubulin beta-1 chain (TUBB1) from Anemia phyllitidis (Fern).